A 178-amino-acid chain; its full sequence is Cytochrome b6-f complex iron-sulfur subunit (178 aa).

A helical membrane pass occupies residues leucine 20 to methionine 42. One can recognise a Rieske domain in the interval lysine 65–valine 161. [2Fe-2S] cluster-binding residues include cysteine 107, histidine 109, cysteine 125, and histidine 128. Cysteine 112 and cysteine 127 are disulfide-bonded.

Belongs to the Rieske iron-sulfur protein family. The 4 large subunits of the cytochrome b6-f complex are cytochrome b6, subunit IV (17 kDa polypeptide, PetD), cytochrome f and the Rieske protein, while the 4 small subunits are PetG, PetL, PetM and PetN. The complex functions as a dimer. [2Fe-2S] cluster is required as a cofactor.

It localises to the cellular thylakoid membrane. The catalysed reaction is 2 oxidized [plastocyanin] + a plastoquinol + 2 H(+)(in) = 2 reduced [plastocyanin] + a plastoquinone + 4 H(+)(out). In terms of biological role, component of the cytochrome b6-f complex, which mediates electron transfer between photosystem II (PSII) and photosystem I (PSI), cyclic electron flow around PSI, and state transitions. This Prochlorococcus marinus (strain MIT 9312) protein is Cytochrome b6-f complex iron-sulfur subunit.